Consider the following 507-residue polypeptide: Solute carrier family 2, facilitated glucose transporter member 6 (507 aa).

The tract at residues methionine 1–alanine 28 is disordered. Residues methionine 1–arginine 37 are Cytoplasmic-facing. The short motif at leucine 5 to leucine 6 is the Dileucine internalization motif element. Phosphoserine is present on serine 23. Residues valine 38–tyrosine 58 traverse the membrane as a helical segment. The Extracellular portion of the chain corresponds to threonine 59 to alanine 81. Residues serine 82–leucine 102 traverse the membrane as a helical segment. Residues asparagine 103–serine 111 lie on the Cytoplasmic side of the membrane. A helical membrane pass occupies residues isoleucine 112–leucine 132. Topologically, residues tryptophan 133–threonine 140 are extracellular. A helical membrane pass occupies residues leucine 141–alanine 161. At proline 162 to alanine 168 the chain is on the cytoplasmic side. The chain crosses the membrane as a helical span at residues leucine 169 to leucine 189. Glutamine 174 lines the a D-hexose pocket. Residues leucine 190–arginine 194 are Extracellular-facing. A helical membrane pass occupies residues tryptophan 195–proline 215. The Cytoplasmic segment spans residues asparagine 216–threonine 289. A D-hexose is bound at residue glutamine 286–glutamine 287. Residues glycine 290–proline 310 form a helical membrane-spanning segment. Over proline 311–aspartate 314 the chain is Extracellular. A helical membrane pass occupies residues alanine 315–leucine 335. Residues alanine 336–lysine 339 lie on the Cytoplasmic side of the membrane. A helical membrane pass occupies residues valine 340–isoleucine 360. Residues histidine 361 to threonine 395 lie on the Extracellular side of the membrane. N-linked (GlcNAc...) asparagine glycosylation is present at asparagine 370. The chain crosses the membrane as a helical span at residues leucine 396–isoleucine 416. Topologically, residues threonine 417–glycine 435 are cytoplasmic. Tryptophan 418 is a binding site for a D-hexose. A helical membrane pass occupies residues leucine 436 to valine 456. Topologically, residues serine 457 to glutamine 462 are extracellular. Residues valine 463–valine 483 form a helical membrane-spanning segment. The Cytoplasmic segment spans residues proline 484–arginine 507.

This sequence belongs to the major facilitator superfamily. Sugar transporter (TC 2.A.1.1) family. Glucose transporter subfamily. In terms of tissue distribution, highly expressed in brain, spleen and peripheral blood leukocytes.

Its subcellular location is the lysosome membrane. Functionally, probable sugar transporter that acts as a regulator of glycolysis in macrophages. Does not transport glucose. The polypeptide is Solute carrier family 2, facilitated glucose transporter member 6 (Homo sapiens (Human)).